The chain runs to 429 residues: 3-phosphoshikimate 1-carboxyvinyltransferase (429 aa).

K23, S24, and R28 together coordinate 3-phosphoshikimate. Phosphoenolpyruvate is bound at residue K23. Residues G95 and R123 each contribute to the phosphoenolpyruvate site. Positions 168, 170, 316, and 343 each coordinate 3-phosphoshikimate. Phosphoenolpyruvate is bound at residue Q170. The active-site Proton acceptor is D316. 2 residues coordinate phosphoenolpyruvate: R347 and R389.

Belongs to the EPSP synthase family. Monomer.

Its subcellular location is the cytoplasm. The enzyme catalyses 3-phosphoshikimate + phosphoenolpyruvate = 5-O-(1-carboxyvinyl)-3-phosphoshikimate + phosphate. The protein operates within metabolic intermediate biosynthesis; chorismate biosynthesis; chorismate from D-erythrose 4-phosphate and phosphoenolpyruvate: step 6/7. Catalyzes the transfer of the enolpyruvyl moiety of phosphoenolpyruvate (PEP) to the 5-hydroxyl of shikimate-3-phosphate (S3P) to produce enolpyruvyl shikimate-3-phosphate and inorganic phosphate. The sequence is that of 3-phosphoshikimate 1-carboxyvinyltransferase from Bacillus cereus (strain ATCC 10987 / NRS 248).